The primary structure comprises 1523 residues: Disco-interacting protein 2 homolog A (1523 aa).

The DMAP1-binding domain maps to 9-105 (EAAPLPAEVL…TSSASEDEGS (97 aa)). A disordered region spans residues 72-110 (KMPMPSKRRSALVHSSVETYTPPDTSSASEDEGSLRRPG). Residues 87 to 99 (SVETYTPPDTSSA) are compositionally biased toward polar residues. Phosphothreonine occurs at positions 92 and 115. Residues 132 to 158 (QGSSTSSSASSTSSHPGGRPAAAPSAS) are disordered. A compositionally biased stretch (low complexity) spans 134 to 158 (SSTSSSASSTSSHPGGRPAAAPSAS). Short sequence motifs (PXXP motif; required for interaction with CTTN) lie at residues 235-238 (PKRP) and 259-262 (PNQP).

It belongs to the DIP2 family. Interacts with FSTL1; DIP2A may act as a cell surface receptor for FSTL1. Interacts (via N-terminus) with CTTN (via SH3 domain); the interaction promotes acetylation of CTTN and is required for proper synaptic transmission. Interacts with SHANK3. Detected in heart, liver, spleen, lung, kidney and brain with highest levels in brain (at protein level). In adult cortex, preferentially expressed in excitatory neurons. Broadly expressed in neuronal, reproductive and vascular tissues as well as in heart, kidney, liver and lung with expression detected in neurons, mesenchyme, endothelium, smooth muscle cells and cardiomyocytes. Expressed in ectoderm-derived tissues in the developing embryo. Expressed in the developing nervous system.

The protein resides in the cell membrane. The protein localises to the mitochondrion. It localises to the cell projection. It is found in the dendritic spine. It carries out the reaction acetate + ATP + CoA = acetyl-CoA + AMP + diphosphate. Its function is as follows. Catalyzes the de novo synthesis of acetyl-CoA in vitro. Promotes acetylation of CTTN, possibly by providing the acetyl donor, ensuring correct dendritic spine morphology and synaptic transmission. Binds to follistatin-related protein FSTL1 and may act as a cell surface receptor for FSTL1, contributing to AKT activation and subsequent FSTL1-induced survival and function of endothelial cells and cardiac myocytes. The polypeptide is Disco-interacting protein 2 homolog A (Dip2a) (Mus musculus (Mouse)).